Consider the following 490-residue polypeptide: GTPase Der (490 aa).

Residues 3–166 (PVIALVGRPN…IALSEFPKDD (164 aa)) enclose the EngA-type G 1 domain. GTP is bound by residues 9 to 16 (GRPNVGKS), 56 to 60 (DTGGI), and 118 to 121 (NKVD). The disordered stretch occupies residues 164–191 (KDDADEPEEGEEEIVAEGEEAKRIPGPS). Acidic residues predominate over residues 166-181 (DADEPEEGEEEIVAEG). Positions 182 to 191 (EEAKRIPGPS) are enriched in basic and acidic residues. Residues 196-369 (IKIAIIGRPN…SVQNSFKSAV (174 aa)) form the EngA-type G 2 domain. GTP contacts are provided by residues 202 to 209 (GRPNVGKS), 249 to 253 (DTAGV), and 314 to 317 (NKWD). In terms of domain architecture, KH-like spans 370–454 (TRWPTSRLTQ…PIRIEFKGGE (85 aa)). The tract at residues 452–490 (GGENPYEGNKNTLTDRQVNKKRRLMSHHKKADKKRRDKR) is disordered. A compositionally biased stretch (basic residues) spans 470-490 (NKKRRLMSHHKKADKKRRDKR).

This sequence belongs to the TRAFAC class TrmE-Era-EngA-EngB-Septin-like GTPase superfamily. EngA (Der) GTPase family. Associates with the 50S ribosomal subunit.

Its function is as follows. GTPase that plays an essential role in the late steps of ribosome biogenesis. This chain is GTPase Der, found in Pseudomonas fluorescens (strain ATCC BAA-477 / NRRL B-23932 / Pf-5).